The following is a 465-amino-acid chain: Protein unc-93 homolog A (465 aa).

Helical transmembrane passes span 8–28 (VLVV…LQSL), 40–60 (VISL…LPPI), 71–91 (IVVS…PGWA), 96–118 (TSAI…LTIS), and 140–160 (IFFF…SLIF). N183 and N189 each carry an N-linked (GlcNAc...) asparagine glycan. Residues 200–220 (TLLGCYIGVGLLAIIFVAVFL) traverse the membrane as a helical segment. N-linked (GlcNAc...) asparagine glycosylation occurs at N237. 5 consecutive transmembrane segments (helical) span residues 256–276 (LLLL…LSGE), 281–301 (YVTC…FAAS), 319–339 (IALF…LLYW), 343–363 (PDQL…DAVW), and 410–427 (IYIA…YLYV).

This sequence belongs to the unc-93 family.

It is found in the membrane. The chain is Protein unc-93 homolog A (unc93a) from Danio rerio (Zebrafish).